Here is a 583-residue protein sequence, read N- to C-terminus: Lipoprotein LpqB (583 aa).

Positions M1–G29 are cleaved as a signal peptide. The N-palmitoyl cysteine moiety is linked to residue C30. C30 is lipidated: S-diacylglycerol cysteine. Positions N38–S63 are disordered.

Belongs to the LpqB lipoprotein family.

It is found in the cell membrane. The sequence is that of Lipoprotein LpqB from Corynebacterium jeikeium (strain K411).